Reading from the N-terminus, the 139-residue chain is GSK3B-interacting protein (139 aa).

The segment at 41–45 (VNDVL) is required for PRKAR2A interaction; contributes to a protective effect against H(2)O(2)-induced apoptosis. The tract at residues 115-139 (SPAYREAFGNALLQRLEALKREGQS) is interaction with GSK3B and acts as a GSK3B inhibitor.

Belongs to the GSKIP family. Forms a complex composed of PRKAR2A or PRKAR2B, GSK3B and GSKIP through GSKIP interaction; facilitates PKA-induced phosphorylation of GSK3B leading to GSK3B inactivation; recruits DNM1L through GSK3B for PKA-mediated phosphorylation of DNM1L; promotes beta-catenin degradation through GSK3B-induced phosphorylation of beta-catenin; stabilizes beta-catenin and enhances Wnt-induced signaling through PKA-induced phosphorylation of beta-catenin. Interacts with GSK3B; induces GSK3B-mediated phosphorylation of GSKIP and inhibits GSK3B kinase activity. In terms of processing, phosphorylated by GSK3B.

It localises to the cytoplasm. It is found in the nucleus. A-kinase anchoring protein for GSK3B and PKA that regulates or facilitates their kinase activity towards their targets. The ternary complex enhances Wnt-induced signaling by facilitating the GSK3B- and PKA-induced phosphorylation of beta-catenin leading to beta-catenin degradation and stabilization respectively. Upon cAMP activation, the ternary complex contributes to neuroprotection against oxidative stress-induced apoptosis by facilitating the PKA-induced phosphorylation of DML1 and PKA-induced inactivation of GSK3B. During neurite outgrowth promotes neuron proliferation; while increases beta-catenin-induced transcriptional activity through GSK3B kinase activity inhibition, reduces N-cadherin level to promote cell cycle progression. May play a role in cleft palate formation and is required for postnatal life through modulation of the activity of GSK3B during development. In Bos taurus (Bovine), this protein is GSK3B-interacting protein.